A 263-amino-acid polypeptide reads, in one-letter code: Probable ribosomal RNA small subunit methyltransferase A (263 aa).

S-adenosyl-L-methionine-binding residues include leucine 12, glycine 37, glutamate 58, aspartate 83, and asparagine 100.

It belongs to the class I-like SAM-binding methyltransferase superfamily. rRNA adenine N(6)-methyltransferase family. RsmA subfamily.

It is found in the cytoplasm. Specifically dimethylates two adjacent adenosines in the loop of a conserved hairpin near the 3'-end of 16S rRNA in the 30S particle. May play a critical role in biogenesis of 30S subunits. In Methanococcus maripaludis (strain C6 / ATCC BAA-1332), this protein is Probable ribosomal RNA small subunit methyltransferase A.